The primary structure comprises 381 residues: Homoserine O-acetyltransferase (381 aa).

The 313-residue stretch at 47–359 (NAILICHALT…DKGHDAFLLD (313 aa)) folds into the AB hydrolase-1 domain. Serine 153 (nucleophile) is an active-site residue. Arginine 223 contacts substrate. Active-site residues include aspartate 320 and histidine 353. Aspartate 354 is a substrate binding site.

Belongs to the AB hydrolase superfamily. MetX family. In terms of assembly, homodimer.

The protein localises to the cytoplasm. It catalyses the reaction L-homoserine + acetyl-CoA = O-acetyl-L-homoserine + CoA. The protein operates within amino-acid biosynthesis; L-methionine biosynthesis via de novo pathway; O-acetyl-L-homoserine from L-homoserine: step 1/1. Functionally, transfers an acetyl group from acetyl-CoA to L-homoserine, forming acetyl-L-homoserine. The protein is Homoserine O-acetyltransferase of Acidiphilium cryptum (strain JF-5).